The following is a 65-amino-acid chain: Large ribosomal subunit protein bL35 (65 aa).

The protein belongs to the bacterial ribosomal protein bL35 family.

This chain is Large ribosomal subunit protein bL35, found in Clostridium botulinum (strain Loch Maree / Type A3).